The sequence spans 185 residues: uncharacterized protein (185 aa).

In terms of domain architecture, G spans 17–137; sequence GKSSIMNALF…QKPIIVVINK (121 aa).

This is an uncharacterized protein from Methanocaldococcus jannaschii (strain ATCC 43067 / DSM 2661 / JAL-1 / JCM 10045 / NBRC 100440) (Methanococcus jannaschii).